Here is a 237-residue protein sequence, read N- to C-terminus: Terpene cyclase spyD (237 aa).

Helical transmembrane passes span 17 to 37 (IYNVLVATAGMMWLINYIVTV), 47 to 67 (AIPLVSLCCNIAWEFTVVLVY), 71 to 91 (YLLFEIFCAMWLLVNMVIVYG), 109 to 129 (HLPLIVPLAILGCISGYYALA), 138 to 158 (IHGGGTFASFVMTVDCLCQLL), 167 to 187 (SWTMWLTRVLGSYAAIVGEFL), and 206 to 226 (WCTGMAVTMDILYACIFWYMG).

It belongs to the paxB family.

The protein localises to the membrane. It carries out the reaction (S)-(2E,6E,10E)-epoxygeranylgeranyl-triacetate lactone = sartorypyrone F. It catalyses the reaction (S)-(2E,6E,10E)-epoxygeranylgeranyl-triacetate lactone = sartorypyrone D. Its pathway is secondary metabolite biosynthesis; terpenoid biosynthesis. Terpene cyclase; part of the gene cluster that mediates the biosynthesis of meroterpenoids called sartorypyrones. Within the pathway, spyD catalyzes the cyclization of epoxygeranylgeranyl-triacetate lactone. SpyD exhibits promiscuous activity, resulting in the formation of bicyclic sartorypyrone F and monocyclic sartorypyrone D. The biosynthesis of sartorypyrones begins with the production of triacetic acid lactone (TAL) by the NR-PKS spyA using one molecule of acetyl-CoA and two molecules of malonyl-CoA. The prenyltransferase spyF then conjugates geranylgeranyl pyrophosphate (GGPP) to TAL to form geranylgeranyl-triacetate lactone, for which the pathway-specific geranylgeranyl pyrophosphate synthase (GGPS) spyE is required to provide GGPP. Subsequently, geranylgeranyl-triacetate lactone is epoxidized at the terminal olein by the FAD-dependent monooxygenase spyC, followed by cyclization of the terpenoid component catalyzed by the terpene cyclase spyD to produce both the bicyclic sartorypyrone F and the monocyclic sartorypyrone D. Finally, the last step of the biosynthesis involves the acetylation of the meroterpenoids sartorypyrones D and F by the acetyltransferase SpyB to produce sartorypyrones A and G, respectively. The sequence is that of Terpene cyclase spyD from Aspergillus fumigatus (strain ATCC MYA-4609 / CBS 101355 / FGSC A1100 / Af293) (Neosartorya fumigata).